The following is a 113-amino-acid chain: 4-cresol dehydrogenase [hydroxylating] cytochrome c subunit (113 aa).

An N-terminal signal peptide occupies residues Met1–Ala33. Heme c contacts are provided by Cys48, Cys51, His52, and Met83.

As to quaternary structure, tetramer of two cytochrome subunits and two flavoprotein subunits. Post-translationally, binds 1 heme c group covalently per subunit.

It participates in aromatic compound metabolism; p-cresol degradation. Its function is as follows. This is the heme-containing component of the p-cresol methylhydroxylase. It accepts electrons from the flavoprotein subunit. This Pseudomonas putida (Arthrobacter siderocapsulatus) protein is 4-cresol dehydrogenase [hydroxylating] cytochrome c subunit (pchC).